The primary structure comprises 108 residues: MGFEQGDAKKGANLFKTRCAQCHTLKAGEGNKIGPELHGLFGRKTGSVAGYSYTDANKQKGIEWNHDTLFEYLENPKKYIPGTKMAFGGLKKPKDRNDLITFLEQETK.

Positions 19, 22, 23, and 85 each coordinate heme c.

Belongs to the cytochrome c family. Post-translationally, binds 1 heme c group covalently per subunit.

The protein localises to the mitochondrion intermembrane space. In terms of biological role, electron carrier protein. The oxidized form of the cytochrome c heme group can accept an electron from the heme group of the cytochrome c1 subunit of cytochrome reductase. Cytochrome c then transfers this electron to the cytochrome oxidase complex, the final protein carrier in the mitochondrial electron-transport chain. The protein is Cytochrome c of Cochliobolus lunatus (Filamentous fungus).